Reading from the N-terminus, the 35-residue chain is Photosystem II reaction center protein T (35 aa).

The helical transmembrane segment at 3–23 (ALVYTFLLVGTLGIIFFAIFF) threads the bilayer.

It belongs to the PsbT family. In terms of assembly, PSII is composed of 1 copy each of membrane proteins PsbA, PsbB, PsbC, PsbD, PsbE, PsbF, PsbH, PsbI, PsbJ, PsbK, PsbL, PsbM, PsbT, PsbY, PsbZ, Psb30/Ycf12, at least 3 peripheral proteins of the oxygen-evolving complex and a large number of cofactors. It forms dimeric complexes.

The protein resides in the plastid. It localises to the chloroplast thylakoid membrane. Its function is as follows. Found at the monomer-monomer interface of the photosystem II (PS II) dimer, plays a role in assembly and dimerization of PSII. PSII is a light-driven water plastoquinone oxidoreductase, using light energy to abstract electrons from H(2)O, generating a proton gradient subsequently used for ATP formation. In Zygnema circumcarinatum (Green alga), this protein is Photosystem II reaction center protein T.